The sequence spans 80 residues: Small ribosomal subunit protein bS18 (80 aa).

Belongs to the bacterial ribosomal protein bS18 family. In terms of assembly, part of the 30S ribosomal subunit. Forms a tight heterodimer with protein bS6.

In terms of biological role, binds as a heterodimer with protein bS6 to the central domain of the 16S rRNA, where it helps stabilize the platform of the 30S subunit. The protein is Small ribosomal subunit protein bS18 of Staphylococcus epidermidis (strain ATCC 35984 / DSM 28319 / BCRC 17069 / CCUG 31568 / BM 3577 / RP62A).